The following is a 369-amino-acid chain: Pyruvate dehydrogenase E1 component subunit alpha (369 aa).

In terms of assembly, heterodimer of an alpha and a beta chain. It depends on thiamine diphosphate as a cofactor.

It catalyses the reaction N(6)-[(R)-lipoyl]-L-lysyl-[protein] + pyruvate + H(+) = N(6)-[(R)-S(8)-acetyldihydrolipoyl]-L-lysyl-[protein] + CO2. Its function is as follows. The pyruvate dehydrogenase complex catalyzes the overall conversion of pyruvate to acetyl-CoA and CO(2). It contains multiple copies of three enzymatic components: pyruvate dehydrogenase (E1), dihydrolipoamide acetyltransferase (E2) and lipoamide dehydrogenase (E3). In Geobacillus stearothermophilus (Bacillus stearothermophilus), this protein is Pyruvate dehydrogenase E1 component subunit alpha (pdhA).